We begin with the raw amino-acid sequence, 940 residues long: Isoleucine--tRNA ligase (940 aa).

The 'HIGH' region signature appears at 58–68 (PYANGSIHIGH). Residue glutamate 564 coordinates L-isoleucyl-5'-AMP. Residues 605 to 609 (KMSKS) carry the 'KMSKS' region motif. ATP is bound at residue lysine 608. 4 residues coordinate Zn(2+): cysteine 903, cysteine 906, cysteine 923, and cysteine 926.

This sequence belongs to the class-I aminoacyl-tRNA synthetase family. IleS type 1 subfamily. Monomer. The cofactor is Zn(2+).

It localises to the cytoplasm. It catalyses the reaction tRNA(Ile) + L-isoleucine + ATP = L-isoleucyl-tRNA(Ile) + AMP + diphosphate. Catalyzes the attachment of isoleucine to tRNA(Ile). As IleRS can inadvertently accommodate and process structurally similar amino acids such as valine, to avoid such errors it has two additional distinct tRNA(Ile)-dependent editing activities. One activity is designated as 'pretransfer' editing and involves the hydrolysis of activated Val-AMP. The other activity is designated 'posttransfer' editing and involves deacylation of mischarged Val-tRNA(Ile). The chain is Isoleucine--tRNA ligase from Shewanella sp. (strain MR-7).